The chain runs to 513 residues: ATP synthase subunit alpha (513 aa).

169-176 (GDRQTGKT) is a binding site for ATP.

This sequence belongs to the ATPase alpha/beta chains family. In terms of assembly, F-type ATPases have 2 components, CF(1) - the catalytic core - and CF(0) - the membrane proton channel. CF(1) has five subunits: alpha(3), beta(3), gamma(1), delta(1), epsilon(1). CF(0) has three main subunits: a(1), b(2) and c(9-12). The alpha and beta chains form an alternating ring which encloses part of the gamma chain. CF(1) is attached to CF(0) by a central stalk formed by the gamma and epsilon chains, while a peripheral stalk is formed by the delta and b chains.

The protein resides in the cell inner membrane. The enzyme catalyses ATP + H2O + 4 H(+)(in) = ADP + phosphate + 5 H(+)(out). In terms of biological role, produces ATP from ADP in the presence of a proton gradient across the membrane. The alpha chain is a regulatory subunit. The chain is ATP synthase subunit alpha from Shewanella oneidensis (strain ATCC 700550 / JCM 31522 / CIP 106686 / LMG 19005 / NCIMB 14063 / MR-1).